Here is a 546-residue protein sequence, read N- to C-terminus: ATP synthase subunit alpha (546 aa).

172 to 179 serves as a coordination point for ATP; it reads GDRKTGKT.

The protein belongs to the ATPase alpha/beta chains family. As to quaternary structure, F-type ATPases have 2 components, CF(1) - the catalytic core - and CF(0) - the membrane proton channel. CF(1) has five subunits: alpha(3), beta(3), gamma(1), delta(1), epsilon(1). CF(0) has three main subunits: a(1), b(2) and c(9-12). The alpha and beta chains form an alternating ring which encloses part of the gamma chain. CF(1) is attached to CF(0) by a central stalk formed by the gamma and epsilon chains, while a peripheral stalk is formed by the delta and b chains.

It localises to the cell membrane. It catalyses the reaction ATP + H2O + 4 H(+)(in) = ADP + phosphate + 5 H(+)(out). Produces ATP from ADP in the presence of a proton gradient across the membrane. The alpha chain is a regulatory subunit. In Corynebacterium efficiens (strain DSM 44549 / YS-314 / AJ 12310 / JCM 11189 / NBRC 100395), this protein is ATP synthase subunit alpha.